Reading from the N-terminus, the 282-residue chain is Serine/threonine-protein kinase Aurora-2 (282 aa).

The Protein kinase domain maps to 19 to 270 (FDIGKPLGRG…LHKLLEHPWI (252 aa)). ATP contacts are provided by residues 25-33 (LGRGKFGHV) and Lys48. Catalysis depends on Asp142, which acts as the Proton acceptor. Residue Ser164 is modified to Phosphoserine. Thr173 is modified (phosphothreonine).

This sequence belongs to the protein kinase superfamily. Ser/Thr protein kinase family. Aurora subfamily. In terms of processing, phosphorylation at Thr-173 may regulate activity and degradation of AUR2 in a cell cycle dependent manner. Abundant in roots, flowers and flower buds, low or absent in expanded leaves, stems and siliques.

It localises to the nucleus membrane. It is found in the cytoplasm. Its subcellular location is the cytoskeleton. The protein localises to the spindle. The protein resides in the spindle pole. It catalyses the reaction L-seryl-[protein] + ATP = O-phospho-L-seryl-[protein] + ADP + H(+). The enzyme catalyses L-threonyl-[protein] + ATP = O-phospho-L-threonyl-[protein] + ADP + H(+). Its function is as follows. Phosphorylates specifically 'Ser-10' of histone H3 in vitro. Associates with cytoskeletal structures that are necessary for cytokinesis and with the microtubule spindle. Might colocalize with gamma-tubulin and function in microtubule organizing centers (MTOCs). The sequence is that of Serine/threonine-protein kinase Aurora-2 (AUR2) from Arabidopsis thaliana (Mouse-ear cress).